The primary structure comprises 371 residues: Queuine tRNA-ribosyltransferase (371 aa).

D90 acts as the Proton acceptor in catalysis. Substrate contacts are provided by residues 90-94 (DSGGF), D144, Q188, and G215. Residues 246-252 (GVGTPED) are RNA binding. D265 (nucleophile) is an active-site residue. Positions 270 to 274 (TRNAR) are RNA binding; important for wobble base 34 recognition. Zn(2+) contacts are provided by C303, C305, C308, and H334.

The protein belongs to the queuine tRNA-ribosyltransferase family. In terms of assembly, homodimer. Within each dimer, one monomer is responsible for RNA recognition and catalysis, while the other monomer binds to the replacement base PreQ1. Zn(2+) is required as a cofactor.

It carries out the reaction 7-aminomethyl-7-carbaguanine + guanosine(34) in tRNA = 7-aminomethyl-7-carbaguanosine(34) in tRNA + guanine. It functions in the pathway tRNA modification; tRNA-queuosine biosynthesis. Its function is as follows. Catalyzes the base-exchange of a guanine (G) residue with the queuine precursor 7-aminomethyl-7-deazaguanine (PreQ1) at position 34 (anticodon wobble position) in tRNAs with GU(N) anticodons (tRNA-Asp, -Asn, -His and -Tyr). Catalysis occurs through a double-displacement mechanism. The nucleophile active site attacks the C1' of nucleotide 34 to detach the guanine base from the RNA, forming a covalent enzyme-RNA intermediate. The proton acceptor active site deprotonates the incoming PreQ1, allowing a nucleophilic attack on the C1' of the ribose to form the product. After dissociation, two additional enzymatic reactions on the tRNA convert PreQ1 to queuine (Q), resulting in the hypermodified nucleoside queuosine (7-(((4,5-cis-dihydroxy-2-cyclopenten-1-yl)amino)methyl)-7-deazaguanosine). This Neisseria meningitidis serogroup B (strain ATCC BAA-335 / MC58) protein is Queuine tRNA-ribosyltransferase.